We begin with the raw amino-acid sequence, 561 residues long: uncharacterized protein (561 aa).

6 helical membrane-spanning segments follow: residues 10–29 (LLRN…GYWI), 34–56 (FGSL…SQIG), 63–80 (LKTV…FQSG), 95–117 (VLMA…RMFH), 122–144 (LAAG…SSAL), and 164–186 (GYAV…ILPW). RCK C-terminal domains are found at residues 205–287 (QGMA…LLGE) and 294–376 (HDMD…ELGS). 5 consecutive transmembrane segments (helical) span residues 386–403 (LVFH…GLIV), 407–429 (GSIP…FGWY), 442–464 (AAST…LQTG), 479–501 (FMLG…RYVL), and 538–560 (SFAI…VVAF).

This sequence belongs to the AAE transporter (TC 2.A.81) family.

The protein localises to the cell membrane. This is an uncharacterized protein from Zymomonas mobilis subsp. mobilis (strain ATCC 31821 / ZM4 / CP4).